Consider the following 147-residue polypeptide: Small ribosomal subunit protein eS19 (147 aa).

Belongs to the eukaryotic ribosomal protein eS19 family. Part of the 30S ribosomal subunit.

Functionally, may be involved in maturation of the 30S ribosomal subunit. This Archaeoglobus fulgidus (strain ATCC 49558 / DSM 4304 / JCM 9628 / NBRC 100126 / VC-16) protein is Small ribosomal subunit protein eS19.